The primary structure comprises 180 residues: Large ribosomal subunit protein uL5 (180 aa).

It belongs to the universal ribosomal protein uL5 family. As to quaternary structure, part of the 50S ribosomal subunit; part of the 5S rRNA/L5/L18/L25 subcomplex. Contacts the 5S rRNA and the P site tRNA. Forms a bridge to the 30S subunit in the 70S ribosome.

Its function is as follows. This is one of the proteins that bind and probably mediate the attachment of the 5S RNA into the large ribosomal subunit, where it forms part of the central protuberance. In the 70S ribosome it contacts protein S13 of the 30S subunit (bridge B1b), connecting the 2 subunits; this bridge is implicated in subunit movement. Contacts the P site tRNA; the 5S rRNA and some of its associated proteins might help stabilize positioning of ribosome-bound tRNAs. The chain is Large ribosomal subunit protein uL5 from Mycoplasma pneumoniae (strain ATCC 29342 / M129 / Subtype 1) (Mycoplasmoides pneumoniae).